We begin with the raw amino-acid sequence, 393 residues long: Acetate kinase (393 aa).

Residue Asn7 participates in Mg(2+) binding. Lys14 is a binding site for ATP. Substrate is bound at residue Arg90. Asp147 functions as the Proton donor/acceptor in the catalytic mechanism. ATP contacts are provided by residues 205-209, 280-282, and 328-332; these read HLGNG, DFR, and GIGEN. Residue Glu380 coordinates Mg(2+).

It belongs to the acetokinase family. In terms of assembly, homodimer. Mg(2+) serves as cofactor. Requires Mn(2+) as cofactor.

It localises to the cytoplasm. The catalysed reaction is acetate + ATP = acetyl phosphate + ADP. The protein operates within metabolic intermediate biosynthesis; acetyl-CoA biosynthesis; acetyl-CoA from acetate: step 1/2. Catalyzes the formation of acetyl phosphate from acetate and ATP. Can also catalyze the reverse reaction. This chain is Acetate kinase, found in Finegoldia magna (strain ATCC 29328 / DSM 20472 / WAL 2508) (Peptostreptococcus magnus).